The following is a 2635-amino-acid chain: MSTKAEQFASKIRYLQEYHNRVLHNIYPVPSGTDIANTLKYFSQTLLSILSRTGKKENQDASNLTVPMTMCLFPVPFPLTPSLRPQVSSINPTVTRSLLYSVLRDAPSERGPQSRDAQLSDYPSLDYQGLYVTLVTLLDLVPLLQHGQHDLGQSIFYTTTCLLPFLNDDILSTLPYTMISTLATFPPFLHKDIIEYLSTSFLPMAILGSSRREGVPAHVNLSASSMLMIAMQYTSNPVYHCQLLECLMKYKQEVWKDLLYVIAYGPSQVKPPAVQMLFHYWPNLKPPGAISEYRGLQYTAWNPIHCQHIECHNAINKPAVKMCIDPSLSVALGDKPPPLYLCEECSERIAGDHSEWLIDVLLPQAEISAICQKKNCSSHVRRAVVTCFSAGCCGRHGNRPVRYCKRCHSNHHSNEVGAAAETHLYQTSPPPINTRECGAEELVCAVEAVISLLKEAEFHAEQREHELNRRRQLGLSSSHHSLDNADFDNKDDDKHDQRLLSQFGIWFLVSLCTPSENTPTESLARLVAMVFQWFHSTAYMMDDEVGSLVEKLKPQFVTKWLKTVCDVRFDVMVMCLLPKPMEFARVGGYWDKSCSTVTQLKEGLNRILCLIPYNVINQSVWECIMPEWLEAIRTEVPDNQLKEFREVLSKMFDIELCPLPFSMEEMFGFISCRFTGYPSSVQEQALLWLHVLSELDIMVPLQLLISMFSDGVNSVKELANQRKSRVSELAGNLASRRVSVASDPGRRVQHNMLSPFHSPFQSPFRSPLRSPFRSPFKNFGHPGGRTIDFDCEDDEMNLNCFILMFDLLLKQMELQDDGITMGLEHSLSKDIISIINNVFQAPWGGSHTCQKDEKAIECNLCQSSILCYQLACELLERLAPKEESRLVEPTDSLEDSLLSSRPEFIIGPEGEEEENPASKHGENPGNCTEPVEHAAVKNDTERKFCYQQLPVTLRLIYTIFQEMAKFEEPDILFNMLNCLKILCLHGECLYIARKDHPQFLAYIQDHMLIASLWRVVKSEFSQLSSLAVPLLLHALSLPHGADIFWTIINGNFNSKDWKMRFEAVEKVAVICRFLDIHSVTKNHLLKYSLAHAFCCFLTAVEDVNPAVATRAGLLLDTIKRPALQGLCLCLDFQFDTVVKDRPTILSKLLLLHFLKQDIPALSWEFFVNRFETLSLEAQLHLDCNKEFPFPTTITAVRTNVANLSDAALWKIKRARFARNRQKSVRSLRDSVKGPVESKRALSLPETLTSKIRQQSPENDNTIKDLLPEDAGIDHQTVHQLITVLMKFMAKDESSAESDISSAKAFNTVKRHLYVLLGYDQQEGCFMIAPQKMRLSTCFNAFIAGIAQVMDYNINLGKHLLPLVVQVLKYCSCPQLRHYFQQPPRCSLWSLKPHIRQMWLKALLVILYKYPYRDCDISKILLHLIHITVNTLNAQYHSCKPHATAGPLYSDNSNISRYSEKEKGEIELAEYRETGALQDSLLHCVREESIPKKKLRSFKQKSLDIGNADSLLFTLDEHRRKSCIDRCDIEKPPTQAAYIAQRPNDPGRSRQNSATRPDNSEIPENPAMEGFPDARRPVIPEVRLNCMETFEVKVDSPVKPAPKEDLDLIDLSSDSTSGPEKHSILSTSDSDSLVFEPLPPLRIVESDEEEETMNQGDDGPSGKNAASSPSVPSHPSVLSLSTAPLVQVSVEDCSKDFSSKDSGNNQSAGNTDSALITLEDPMDAEGSSKPEELPEFSCGSPLTLKQKRDLLQKSFALPEMSLDDHPDPGTEGEKPGELMPSSGAKTVLLKVPEDAENPTESEKPDTSAESDTEQNPERKVEEDGAEESEFKIQIVPRQRKQRKIAVSAIQREYLDISFNILDKLGEQKDPDPSTKGLSTLEMPRESSSAPTLDAGVPETSSHSSISTQYRQMKRGSLGVLTMSQLMKRQLEHQSSAPHNISNWDTEQIQPGKRQCNVPTCLNPDLEGQPLRMRGATKSSLLSAPSIVSMFVPAPEEFTDEQPTVMTDKCHDCGAILEEYDEETLGLAIVVLSTFIHLSPDLAAPLLLDIMQSVGRLASSTTFSNQAESMMVPGNAAGVAKQFLRCIFHQLAPNGIFPQLFQSTIKDGTFLRTLASSLMDFNELSSIAALSQLLEGLNNKKNLPAGGAMIRCLENIATFMEALPMDSPSSLWTTISNQFQTFFAKLPCVLPLKCSLDSSLRIMICLLKIPSTNATRSLLEPFSKLLSFVIQNAVFTLAYLVELCGLCYRAFTKERDKFYLSRSVVLELLQALKLKSPLPDTNLLLLVQFICADAGTKLAESTILSKQMIASVPGCGTAAMECVRQYINEVLDFMADMHTLTKLKSHMKTCSQPLHEDTFGGHLKVGLAQIAAMDISRGNHRDNKAVIRYLPWLYHPPSAMQQGPKEFIECVSHIRLLSWLLLGSLTHNAVCPNASSPCLPIPLDAGSHVADHLIVILIGFPEQSKTSVLHMCSLFHAFIFAQLWTVYCEQSAVATNLQNQNEFSFTAILTALEFWSRVTPSILQLMAHNKVMVEMVCLHVISLMEALQECNSTIFVKLIPMWLPMIQSNIKHLSAGLQLRLQAIQNHVNHHSLRTLPGSGQSSAGLAALRKWLQCTQFKMAQVEIQSSEAASQFYPL.

Phosphoserine is present on residues Ser-754 and Ser-758. Disordered stretches follow at residues 907–929, 1538–1575, 1607–1678, 1693–1832, 1863–1909, and 1929–1950; these read GPEGEEEENPASKHGENPGNCTE, IAQRPNDPGRSRQNSATRPDNSEIPENPAMEGFPDARR, LIDL…SVLS, SKDF…FKIQ, LGEQ…TQYR, and LEHQSSAPHNISNWDTEQIQPG. Low complexity predominate over residues 1666-1678; that stretch reads SSPSVPSHPSVLS. Residues 1699–1713 are compositionally biased toward polar residues; it reads KDSGNNQSAGNTDSA. The segment covering 1761-1775 has biased composition (basic and acidic residues); that stretch reads LDDHPDPGTEGEKPG. 2 stretches are compositionally biased toward polar residues: residues 1897–1909 and 1929–1947; these read ETSSHSSISTQYR and LEHQSSAPHNISNWDTEQI. Helical transmembrane passes span 2223-2243 and 2466-2486; these read LLSFVIQNAVFTLAYLVELCG and VLHMCSLFHAFIFAQLWTVYC.

Belongs to the unc-79 family. In terms of assembly, NALCN complex consists of NALCN and auxiliary subunits, UNC79, UNC80 and NACL1. These auxiliary subunits are essential for the NALCN channel function. UNC80 bridges NALCN to UNC79.

The protein resides in the cell membrane. Functionally, auxiliary subunit of the NALCN sodium channel complex, a voltage-gated ion channel responsible for the resting Na(+) permeability that controls neuronal excitability. Activated by neuropeptides substance P, neurotensin, and extracellular calcium that regulates neuronal excitability by controlling the sizes of NALCN-dependent sodium-leak current. The sequence is that of Protein unc-79 homolog (UNC79) from Homo sapiens (Human).